Reading from the N-terminus, the 412-residue chain is rRNA methyltransferase 1, mitochondrial (412 aa).

A mitochondrion-targeting transit peptide spans 1 to 20 (MTSLTNAVFKRYLAVTPSAH).

This sequence belongs to the class IV-like SAM-binding methyltransferase superfamily. RNA methyltransferase TrmH family.

It is found in the mitochondrion. It carries out the reaction guanosine(2270) in 21S rRNA + S-adenosyl-L-methionine = 2'-O-methylguanosine(2270) in 21S rRNA + S-adenosyl-L-homocysteine + H(+). In terms of biological role, S-adenosyl-L-methionine-dependent 2'-O-ribose methyltransferase that catalyzes the formation of 2'-O-methylguanosine at position 2270 (Gm2270) in the 21S mitochondrial large subunit ribosomal RNA (mtLSU rRNA), a universally conserved modification in the peptidyl transferase domain of the mtLSU rRNA. This modification seems to be important for the normal accumulation of the mitochondrial large ribosomal subunit. This chain is rRNA methyltransferase 1, mitochondrial, found in Saccharomyces cerevisiae (strain ATCC 204508 / S288c) (Baker's yeast).